The chain runs to 203 residues: Thymidylate kinase (203 aa).

10–17 (GIDGAGKS) serves as a coordination point for ATP.

This sequence belongs to the thymidylate kinase family.

It carries out the reaction dTMP + ATP = dTDP + ADP. Functionally, phosphorylation of dTMP to form dTDP in both de novo and salvage pathways of dTTP synthesis. In Cupriavidus taiwanensis (strain DSM 17343 / BCRC 17206 / CCUG 44338 / CIP 107171 / LMG 19424 / R1) (Ralstonia taiwanensis (strain LMG 19424)), this protein is Thymidylate kinase.